The sequence spans 739 residues: Sulfate transporter (739 aa).

The interval 1–27 (MSSESKEQHNVSPRDSAEGNDSYPSGI) is disordered. A phosphoserine mark is found at serine 12 and serine 16. The next 2 membrane-spanning stretches (helical) occupy residues 112-132 (VMSGLIVGILLVPQSIAYSLL) and 137-157 (PVYGLYTSFFASIIYFLLGTS). Asparagine 199 and asparagine 205 each carry an N-linked (GlcNAc...) asparagine glycan. 2 consecutive transmembrane segments (helical) span residues 219–239 (IMVGSTVTFIAGVYQVAMGFF) and 242–262 (GFVSVYLSDALLSGFVTGASF). N-linked (GlcNAc...) asparagine glycosylation is present at asparagine 357. 4 helical membrane-spanning segments follow: residues 378–398 (LIPSVAVDAIAISIIGFAITV), 420–440 (AIGFCNIIPSFFHCFTTSAAL), 455–475 (LSGVVTALVLLLVLLVIAPLF), and 524–544 (LLSTEIGLLVGVCFSIFCVIL). One can recognise an STAS domain in the interval 568-719 (AYKNLQIKPG…YSVYEAMAFA (152 aa)).

It belongs to the SLC26A/SulP transporter (TC 2.A.53) family. In terms of processing, N-glycosylated. As to expression, ubiquitously expressed.

The protein localises to the cell membrane. Its subcellular location is the apical cell membrane. The enzyme catalyses oxalate(in) + sulfate(out) = oxalate(out) + sulfate(in). It carries out the reaction sulfate(out) + 2 chloride(in) = sulfate(in) + 2 chloride(out). The catalysed reaction is oxalate(out) + 2 chloride(in) = oxalate(in) + 2 chloride(out). It catalyses the reaction bromide(in) + chloride(out) = bromide(out) + chloride(in). The enzyme catalyses nitrate(in) + chloride(out) = nitrate(out) + chloride(in). It carries out the reaction iodide(in) + chloride(out) = iodide(out) + chloride(in). An extracellular acidic pH inhibits chloride-sulfate and chloride-oxalate exchange activity whereas an intracellular acidic pH activates chloride-sulfate exchange with no effect on chloride-oxalate exchange activity. Its function is as follows. Sulfate transporter which mediates sulfate uptake into chondrocytes in order to maintain adequate sulfation of proteoglycans which is needed for cartilage development. Mediates electroneutral anion exchange of sulfate ions for oxalate ions and of sulfate and oxalate ions for chloride ions. Mediates exchange of sulfate and oxalate ions for hydroxyl ions and of chloride ions for bromide, iodide and nitrate ions. The coupling of sulfate transport to both hydroxyl and chloride ions likely serves to ensure transport at both acidic pH when most sulfate uptake is mediated by sulfate-hydroxide exchange and alkaline pH when most sulfate uptake is mediated by sulfate-chloride exchange. Essential for chondrocyte proliferation, differentiation and cell size expansion. The polypeptide is Sulfate transporter (SLC26A2) (Homo sapiens (Human)).